Reading from the N-terminus, the 292-residue chain is Protein/nucleic acid deglycase HchA (292 aa).

Over residues 1-12 (MSQDVNKLSKQP) the composition is skewed to polar residues. The tract at residues 1–23 (MSQDVNKLSKQPTPDKAEDNAFF) is disordered. The active-site Nucleophile is Cys-190.

Belongs to the peptidase C56 family. HchA subfamily.

The protein localises to the cytoplasm. The catalysed reaction is N(omega)-(1-hydroxy-2-oxopropyl)-L-arginyl-[protein] + H2O = lactate + L-arginyl-[protein] + H(+). The enzyme catalyses N(6)-(1-hydroxy-2-oxopropyl)-L-lysyl-[protein] + H2O = lactate + L-lysyl-[protein] + H(+). It catalyses the reaction S-(1-hydroxy-2-oxopropyl)-L-cysteinyl-[protein] + H2O = lactate + L-cysteinyl-[protein] + H(+). It carries out the reaction N(omega)-(1-hydroxy-2-oxoethyl)-L-arginyl-[protein] + H2O = L-arginyl-[protein] + glycolate + H(+). The catalysed reaction is N(6)-(1-hydroxy-2-oxoethyl)-L-lysyl-[protein] + H2O = glycolate + L-lysyl-[protein] + H(+). The enzyme catalyses S-(1-hydroxy-2-oxoethyl)-L-cysteinyl-[protein] + H2O = glycolate + L-cysteinyl-[protein] + H(+). It catalyses the reaction N(2)-(1-hydroxy-2-oxopropyl)-dGTP + H2O = lactate + dGTP + H(+). It carries out the reaction N(2)-(1-hydroxy-2-oxopropyl)-GTP + H2O = lactate + GTP + H(+). The catalysed reaction is N(2)-(1-hydroxy-2-oxopropyl)-GDP + H2O = lactate + GDP + H(+). The enzyme catalyses N(2)-(1-hydroxy-2-oxopropyl)-GMP + H2O = lactate + GMP + H(+). It catalyses the reaction N(2)-(1-hydroxy-2-oxoethyl)-dGTP + H2O = dGTP + glycolate + H(+). It carries out the reaction N(2)-(1-hydroxy-2-oxoethyl)-GTP + H2O = glycolate + GTP + H(+). The catalysed reaction is N(2)-(1-hydroxy-2-oxoethyl)-GDP + H2O = glycolate + GDP + H(+). The enzyme catalyses N(2)-(1-hydroxy-2-oxoethyl)-GMP + H2O = glycolate + GMP + H(+). It catalyses the reaction an N(2)-(1-hydroxy-2-oxopropyl)-guanosine in RNA + H2O = a guanosine in RNA + lactate + H(+). It carries out the reaction an N(2)-(1-hydroxy-2-oxopropyl)-2'-deoxyguanosine in DNA + H2O = a 2'-deoxyguanosine in DNA + lactate + H(+). The catalysed reaction is an N(2)-(1-hydroxy-2-oxoethyl)-guanosine in RNA + H2O = a guanosine in RNA + glycolate + H(+). The enzyme catalyses an N(2)-(1-hydroxy-2-oxoethyl)-2'-deoxyguanosine in DNA + H2O = a 2'-deoxyguanosine in DNA + glycolate + H(+). Protein and nucleotide deglycase that catalyzes the deglycation of the Maillard adducts formed between amino groups of proteins or nucleotides and reactive carbonyl groups of glyoxals. Thus, functions as a protein deglycase that repairs methylglyoxal- and glyoxal-glycated proteins, and releases repaired proteins and lactate or glycolate, respectively. Deglycates cysteine, arginine and lysine residues in proteins, and thus reactivates these proteins by reversing glycation by glyoxals. Acts on early glycation intermediates (hemithioacetals and aminocarbinols), preventing the formation of Schiff bases and advanced glycation endproducts (AGE). Also functions as a nucleotide deglycase able to repair glycated guanine in the free nucleotide pool (GTP, GDP, GMP, dGTP) and in DNA and RNA. Is thus involved in a major nucleotide repair system named guanine glycation repair (GG repair), dedicated to reversing methylglyoxal and glyoxal damage via nucleotide sanitization and direct nucleic acid repair. Plays an important role in protecting cells from carbonyl stress. The chain is Protein/nucleic acid deglycase HchA from Staphylococcus aureus (strain MRSA252).